The chain runs to 198 residues: Thymidine kinase (198 aa).

ATP contacts are provided by residues 9 to 16 and 85 to 88; these read GTMNSGKS and DEAQ. Glu-86 (proton acceptor) is an active-site residue. Cys-143, Cys-146, Cys-180, and His-183 together coordinate Zn(2+).

It belongs to the thymidine kinase family. Homotetramer.

The protein resides in the cytoplasm. The catalysed reaction is thymidine + ATP = dTMP + ADP + H(+). This Streptococcus thermophilus (strain ATCC BAA-250 / LMG 18311) protein is Thymidine kinase.